The chain runs to 965 residues: Vacuolar membrane protease (965 aa).

The Cytoplasmic segment spans residues 1–16 (MARPSLSPSNPLGFTP). Residues 17–37 (WPVTVITAVVYLALVVPLLVV) form a helical membrane-spanning segment. Residues 38 to 387 (HHVVPSAPSS…SAFVVFELHT (350 aa)) lie on the Vacuolar side of the membrane. Asn-53 and Asn-119 each carry an N-linked (GlcNAc...) asparagine glycan. Zn(2+) is bound by residues His-171 and Asp-183. Glu-217 (proton acceptor) is an active-site residue. Residues Glu-218, Glu-243, and His-316 each contribute to the Zn(2+) site. A helical transmembrane segment spans residues 388–408 (LFALSVTLLVVAPLVLLVTSI). Residues 409–441 (ALARADKMYLFRSSASPEDSDGSEVVPLHGVRG) are Cytoplasmic-facing. Residues 442 to 462 (FFRFPFLLVIPTAVTVGLAYL) traverse the membrane as a helical segment. Residues 463–472 (VTKFNPYIIH) are Vacuolar-facing. The chain crosses the membrane as a helical span at residues 473-493 (SSEYAVWSMMISAWVFLAWFV). Over 494 to 507 (SRVADFARPSAFHR) the chain is Cytoplasmic. A helical membrane pass occupies residues 508–528 (VYTLTWLFLVEWVFLVISTVY). Residues 529–532 (ENQY) are Vacuolar-facing. Residues 533–553 (GLAGGYFVLFVFAGTFLATWI) form a helical membrane-spanning segment. Over 554–661 (SYLELFALPR…WSIHLPKWVW (108 aa)) the chain is Cytoplasmic. The interval 577 to 610 (RTSSHGSRLGTASGEDVEDGEDEDDDGTTAEATE) is disordered. Over residues 591–604 (EDVEDGEDEDDDGT) the composition is skewed to acidic residues. The chain crosses the membrane as a helical span at residues 662-682 (VLQFLLTAPLVLIFVGPLALL). The Vacuolar segment spans residues 683-698 (LTSALRQTGQDGSPSL). The chain crosses the membrane as a helical span at residues 699-719 (FIYIAVAALTTLLFIPLLPFI). Topologically, residues 720-725 (HRYTHH) are cytoplasmic. Residues 726 to 746 (IPLFLLCVFAGTLIYNLVAFP) form a helical membrane-spanning segment. The Vacuolar portion of the chain corresponds to 747–965 (FSPANRLKLF…LVEGSRRFEV (219 aa)). N-linked (GlcNAc...) asparagine glycans are attached at residues Asn-793 and Asn-830.

Belongs to the peptidase M28 family. It depends on Zn(2+) as a cofactor.

Its subcellular location is the vacuole membrane. May be involved in vacuolar sorting and osmoregulation. The protein is Vacuolar membrane protease of Aspergillus fumigatus (strain CBS 144.89 / FGSC A1163 / CEA10) (Neosartorya fumigata).